The sequence spans 560 residues: MYDNMSTMVYIKEDKLEKLTQDEIISKTKQVIQGLEALKNEHNSILQSLLETLKCLKKDDESNLVEEKSNMIRKSLEMLELGLSEAQVMMALSNHLNAVESEKQKLRAQVRRLCQENQWLRDELANTQQKLQKSEQSVAQLEEEKKHLEFMNQLKKYDDDISPSEDKDTDSTKEPLDDLFPNDEDDPGQGIQQQHSSAAAAAQQGDYEIPARLRTLHNLVIQYASQGRYEVAVPLCKQALEDLEKTSGHDHPDVATMLNILALVYRDQNKYKDAANLLNDALAIREKTLGKDHPAVAATLNNLAVLYGKRGKYKEAEPLCKRALEIREKVLGKDHPDVAKQLNNLALLCQNQGKYEEVEYYYQRALEIYQTKLGPDDPNVAKTKNNLASCYLKQGKFKQAETLYKEILTRAHEREFGSVDDENKPIWMHAEEREECKGKQKDGTSFGEYGGWYKACKVDSPTVTTTLKNLGALYRRQGKFEAAETLEEAAMRSRKQGLDNVHKQRVAEVLNDPENMEKRRSRESLNVDVVKYESGPDGGEEVSMSVEWNGMRKMKLGLVK.

Residues 31–99 (VIQGLEALKN…MALSNHLNAV (69 aa)) are a coiled coil. The segment covering 155–176 (KKYDDDISPSEDKDTDSTKEPL) has biased composition (basic and acidic residues). The disordered stretch occupies residues 155-203 (KKYDDDISPSEDKDTDSTKEPLDDLFPNDEDDPGQGIQQQHSSAAAAAQ). S162 carries the phosphoserine modification. Over residues 192 to 203 (QQQHSSAAAAAQ) the composition is skewed to low complexity. TPR repeat units lie at residues 213 to 246 (LRTLHNLVIQYASQGRYEVAVPLCKQALEDLEKT), 255 to 288 (ATMLNILALVYRDQNKYKDAANLLNDALAIREKT), 297 to 330 (AATLNNLAVLYGKRGKYKEAEPLCKRALEIREKV), 339 to 372 (AKQLNNLALLCQNQGKYEEVEYYYQRALEIYQTK), and 381 to 414 (AKTKNNLASCYLKQGKFKQAETLYKEILTRAHER). Residue Y449 is modified to Phosphotyrosine. S460 carries the phosphoserine modification. Residues 464-497 (TTTLKNLGALYRRQGKFEAAETLEEAAMRSRKQG) form a TPR 6 repeat. Residues S521 and S524 each carry the phosphoserine; by AMPK modification.

Belongs to the kinesin light chain family. In terms of assembly, oligomeric complex composed of two heavy chains and two light chains. Interacts with SPAG9. Interacts with ATCAY; may link mitochondria to KLC1 and regulate mitochondria localization into neuron projections. Interacts (via TPR repeats) with TOR1A; the interaction associates TOR1A with the kinesin oligomeric complex. Interacts with BORCS5. Interacts with MAPK8IP3/JIP3 and NTRK2/TRKB; interaction with NTRK2/TRKB is mediated by MAPK8IP3/JIP3. Interacts with CLSTN1; phosphorylation at Ser-460 inhibits interaction with CLSTN1. In terms of processing, phosphorylation at Ser-460 by ERK inhibits interaction with CLSTN1 and localization to cytoplasmic vesicles.

The protein resides in the cell projection. Its subcellular location is the growth cone. It localises to the cytoplasmic vesicle. The protein localises to the cytoplasm. It is found in the cytoskeleton. Kinesin is a microtubule-associated force-producing protein that may play a role in organelle transport. The light chain may function in coupling of cargo to the heavy chain or in the modulation of its ATPase activity. The protein is Kinesin light chain 1 (KLC1) of Pongo abelii (Sumatran orangutan).